Reading from the N-terminus, the 487-residue chain is Putative KilA-N domain-containing protein L37 (487 aa).

Residues 1–12 show a composition bias toward basic residues; the sequence is MKVQKSSKKPLK. Residues 1–137 are disordered; the sequence is MKVQKSSKKP…DINSDDDNNL (137 aa). Low complexity predominate over residues 22–34; that stretch reads KSGSKSMKSSKSS. Composition is skewed to acidic residues over residues 47–77 and 111–136; these read DSEI…ESSD and VLDD…DDNN. The region spanning 175–284 is the KilA-N domain; that stretch reads EISKGIYGTF…HKVSKIVNDY (110 aa). The stretch at 290 to 338 forms a coiled coil; it reads FDKHEQLIKGKDDKIAELTRKIDKQTSLMKDQKSTIKEQDKKINELLSK.

This is Putative KilA-N domain-containing protein L37 from Acanthamoeba polyphaga mimivirus (APMV).